An 884-amino-acid chain; its full sequence is Translation initiation factor IF-2 (884 aa).

Basic and acidic residues-rich tracts occupy residues 110 to 153 and 193 to 234; these read AKAK…KEKA and KQKE…DHHV. Residues 110–291 form a disordered region; sequence AKAKAEADAK…NRSTAPQSMA (182 aa). The span at 255-268 shows a compositional bias: basic residues; sequence GRRARNKPTNKKRG. Residues 384–553 enclose the tr-type G domain; that stretch reads TRAPVVTIMG…LLQSEVLELK (170 aa). A G1 region spans residues 393-400; that stretch reads GHVDHGKT. 393 to 400 contacts GTP; it reads GHVDHGKT. Residues 418 to 422 are G2; the sequence is GITQH. Residues 439 to 442 form a G3 region; it reads DTPG. GTP contacts are provided by residues 439 to 443 and 493 to 496; these read DTPGH and NKMD. The segment at 493 to 496 is G4; sequence NKMD. A G5 region spans residues 529 to 531; it reads SAK.

Belongs to the TRAFAC class translation factor GTPase superfamily. Classic translation factor GTPase family. IF-2 subfamily.

It localises to the cytoplasm. One of the essential components for the initiation of protein synthesis. Protects formylmethionyl-tRNA from spontaneous hydrolysis and promotes its binding to the 30S ribosomal subunits. Also involved in the hydrolysis of GTP during the formation of the 70S ribosomal complex. This chain is Translation initiation factor IF-2, found in Shewanella denitrificans (strain OS217 / ATCC BAA-1090 / DSM 15013).